We begin with the raw amino-acid sequence, 800 residues long: Protein translocase subunit SecA (800 aa).

Residues Gln-85, 103–107 (GEGKT), and Asp-504 contribute to the ATP site.

This sequence belongs to the SecA family. In terms of assembly, monomer and homodimer. Part of the essential Sec protein translocation apparatus which comprises SecA, SecYEG and auxiliary proteins SecDF. Other proteins may also be involved.

The protein localises to the cell membrane. Its subcellular location is the cytoplasm. The catalysed reaction is ATP + H2O + cellular proteinSide 1 = ADP + phosphate + cellular proteinSide 2.. Its function is as follows. Part of the Sec protein translocase complex. Interacts with the SecYEG preprotein conducting channel. Has a central role in coupling the hydrolysis of ATP to the transfer of proteins into and across the cell membrane, serving as an ATP-driven molecular motor driving the stepwise translocation of polypeptide chains across the membrane. The chain is Protein translocase subunit SecA from Lactobacillus delbrueckii subsp. bulgaricus (strain ATCC 11842 / DSM 20081 / BCRC 10696 / JCM 1002 / NBRC 13953 / NCIMB 11778 / NCTC 12712 / WDCM 00102 / Lb 14).